The following is a 339-amino-acid chain: Tetraacyldisaccharide 4'-kinase (339 aa).

ATP is bound at residue 62–69 (VAGGTGKT).

It belongs to the LpxK family.

It catalyses the reaction a lipid A disaccharide + ATP = a lipid IVA + ADP + H(+). It participates in glycolipid biosynthesis; lipid IV(A) biosynthesis; lipid IV(A) from (3R)-3-hydroxytetradecanoyl-[acyl-carrier-protein] and UDP-N-acetyl-alpha-D-glucosamine: step 6/6. Its function is as follows. Transfers the gamma-phosphate of ATP to the 4'-position of a tetraacyldisaccharide 1-phosphate intermediate (termed DS-1-P) to form tetraacyldisaccharide 1,4'-bis-phosphate (lipid IVA). The polypeptide is Tetraacyldisaccharide 4'-kinase (Xylella fastidiosa (strain M12)).